Reading from the N-terminus, the 496-residue chain is Maturase K (496 aa).

It belongs to the intron maturase 2 family. MatK subfamily.

The protein localises to the plastid. Its subcellular location is the chloroplast. In terms of biological role, usually encoded in the trnK tRNA gene intron. Probably assists in splicing its own and other chloroplast group II introns. This Paeonia lactiflora (Chinese peony) protein is Maturase K.